Consider the following 446-residue polypeptide: Adenylosuccinate synthetase (446 aa).

GTP is bound by residues 12-18 (GDEGKGK) and 40-42 (GHT). Asp13 serves as the catalytic Proton acceptor. The Mg(2+) site is built by Asp13 and Gly40. IMP contacts are provided by residues 13-16 (DEGK), 38-41 (NAGH), Thr128, Arg142, Gln223, Thr238, and Arg302. The Proton donor role is filled by His41. Residue 298–304 (TTTGRRR) participates in substrate binding. GTP-binding positions include Arg304, 330 to 332 (KLD), and 412 to 414 (SLG).

The protein belongs to the adenylosuccinate synthetase family. As to quaternary structure, homodimer. Requires Mg(2+) as cofactor.

It is found in the cytoplasm. The catalysed reaction is IMP + L-aspartate + GTP = N(6)-(1,2-dicarboxyethyl)-AMP + GDP + phosphate + 2 H(+). The protein operates within purine metabolism; AMP biosynthesis via de novo pathway; AMP from IMP: step 1/2. In terms of biological role, plays an important role in the de novo pathway of purine nucleotide biosynthesis. Catalyzes the first committed step in the biosynthesis of AMP from IMP. The sequence is that of Adenylosuccinate synthetase from Crocosphaera subtropica (strain ATCC 51142 / BH68) (Cyanothece sp. (strain ATCC 51142)).